Here is a 468-residue protein sequence, read N- to C-terminus: UDP-N-acetylmuramate--L-alanine ligase (468 aa).

Gly-114–Thr-120 lines the ATP pocket.

It belongs to the MurCDEF family.

The protein resides in the cytoplasm. The enzyme catalyses UDP-N-acetyl-alpha-D-muramate + L-alanine + ATP = UDP-N-acetyl-alpha-D-muramoyl-L-alanine + ADP + phosphate + H(+). Its pathway is cell wall biogenesis; peptidoglycan biosynthesis. Functionally, cell wall formation. This chain is UDP-N-acetylmuramate--L-alanine ligase, found in Methylorubrum extorquens (strain PA1) (Methylobacterium extorquens).